Here is a 400-residue protein sequence, read N- to C-terminus: Phosphoglycerate kinase (400 aa).

Substrate contacts are provided by residues 19 to 21, Arg-38, 61 to 64, Arg-124, and Arg-161; these read DLN and HLGR. ATP-binding positions include Lys-211, Gly-299, Glu-330, and 356-359; that span reads GGDS.

This sequence belongs to the phosphoglycerate kinase family. In terms of assembly, monomer.

It localises to the cytoplasm. It catalyses the reaction (2R)-3-phosphoglycerate + ATP = (2R)-3-phospho-glyceroyl phosphate + ADP. It functions in the pathway carbohydrate degradation; glycolysis; pyruvate from D-glyceraldehyde 3-phosphate: step 2/5. This Parafrankia sp. (strain EAN1pec) protein is Phosphoglycerate kinase.